The chain runs to 130 residues: Small ribosomal subunit protein uS9 (130 aa).

The protein belongs to the universal ribosomal protein uS9 family.

The polypeptide is Small ribosomal subunit protein uS9 (Bacillus cytotoxicus (strain DSM 22905 / CIP 110041 / 391-98 / NVH 391-98)).